The primary structure comprises 748 residues: Formate acetyltransferase (748 aa).

Residues 5-618 (NNHTNAWQGF…KTGNTPDGRK (614 aa)) form the PFL domain. Catalysis depends on Cys-412, which acts as the S-acetylcysteine intermediate. Cys-413 serves as the catalytic Cysteine radical intermediate. The 124-residue stretch at 625 to 748 (PGANPMHGRD…VISRTFHESM (124 aa)) folds into the Glycine radical domain. Gly-723 is modified (glycine radical).

It belongs to the glycyl radical enzyme (GRE) family. PFL subfamily. Homodimer.

It is found in the cytoplasm. It catalyses the reaction formate + acetyl-CoA = pyruvate + CoA. Its pathway is fermentation; pyruvate fermentation; formate from pyruvate: step 1/1. Catalyzes the conversion of pyruvate to formate and acetyl-CoA. The polypeptide is Formate acetyltransferase (pflB) (Staphylococcus epidermidis (strain ATCC 12228 / FDA PCI 1200)).